A 225-amino-acid polypeptide reads, in one-letter code: Thymidylate kinase (225 aa).

10–17 (GIDGAGKS) contributes to the ATP binding site.

Belongs to the thymidylate kinase family.

The enzyme catalyses dTMP + ATP = dTDP + ADP. Functionally, phosphorylation of dTMP to form dTDP in both de novo and salvage pathways of dTTP synthesis. In Polaromonas sp. (strain JS666 / ATCC BAA-500), this protein is Thymidylate kinase.